A 483-amino-acid polypeptide reads, in one-letter code: Aspartyl/glutamyl-tRNA(Asn/Gln) amidotransferase subunit B (483 aa).

It belongs to the GatB/GatE family. GatB subfamily. As to quaternary structure, heterotrimer of A, B and C subunits.

The enzyme catalyses L-glutamyl-tRNA(Gln) + L-glutamine + ATP + H2O = L-glutaminyl-tRNA(Gln) + L-glutamate + ADP + phosphate + H(+). It catalyses the reaction L-aspartyl-tRNA(Asn) + L-glutamine + ATP + H2O = L-asparaginyl-tRNA(Asn) + L-glutamate + ADP + phosphate + 2 H(+). Its function is as follows. Allows the formation of correctly charged Asn-tRNA(Asn) or Gln-tRNA(Gln) through the transamidation of misacylated Asp-tRNA(Asn) or Glu-tRNA(Gln) in organisms which lack either or both of asparaginyl-tRNA or glutaminyl-tRNA synthetases. The reaction takes place in the presence of glutamine and ATP through an activated phospho-Asp-tRNA(Asn) or phospho-Glu-tRNA(Gln). This chain is Aspartyl/glutamyl-tRNA(Asn/Gln) amidotransferase subunit B, found in Rickettsia bellii (strain RML369-C).